Reading from the N-terminus, the 846-residue chain is Spindle pole body component SPC98 (846 aa).

Residues serine 124 and serine 136 each carry the phosphoserine modification.

This sequence belongs to the TUBGCP family. Interacts with TUB4, SPC72 and SPC97.

It localises to the nucleus. The protein resides in the cytoplasm. The protein localises to the cytoskeleton. It is found in the microtubule organizing center. Its subcellular location is the spindle pole body. Its function is as follows. Involved in microtubule organization by the microtubule organizing center, the spindle pole body (SPB). Probably part of the microtubule attachment site at the SPB. This Saccharomyces cerevisiae (strain ATCC 204508 / S288c) (Baker's yeast) protein is Spindle pole body component SPC98 (SPC98).